A 451-amino-acid polypeptide reads, in one-letter code: Exodeoxyribonuclease 7 large subunit (451 aa).

It belongs to the XseA family. As to quaternary structure, heterooligomer composed of large and small subunits.

The protein resides in the cytoplasm. It catalyses the reaction Exonucleolytic cleavage in either 5'- to 3'- or 3'- to 5'-direction to yield nucleoside 5'-phosphates.. Its function is as follows. Bidirectionally degrades single-stranded DNA into large acid-insoluble oligonucleotides, which are then degraded further into small acid-soluble oligonucleotides. The protein is Exodeoxyribonuclease 7 large subunit of Bacillus cytotoxicus (strain DSM 22905 / CIP 110041 / 391-98 / NVH 391-98).